The sequence spans 315 residues: Transaldolase (315 aa).

Residue Lys-131 is the Schiff-base intermediate with substrate of the active site.

The protein belongs to the transaldolase family. Type 1 subfamily. As to quaternary structure, homodimer.

It localises to the cytoplasm. It carries out the reaction D-sedoheptulose 7-phosphate + D-glyceraldehyde 3-phosphate = D-erythrose 4-phosphate + beta-D-fructose 6-phosphate. It functions in the pathway carbohydrate degradation; pentose phosphate pathway; D-glyceraldehyde 3-phosphate and beta-D-fructose 6-phosphate from D-ribose 5-phosphate and D-xylulose 5-phosphate (non-oxidative stage): step 2/3. In terms of biological role, transaldolase is important for the balance of metabolites in the pentose-phosphate pathway. The chain is Transaldolase from Actinobacillus pleuropneumoniae serotype 5b (strain L20).